A 309-amino-acid polypeptide reads, in one-letter code: Transcriptional regulator HilD (309 aa).

Residues 209 to 306 (ERVYNIISSS…KTTPSTFIKM (98 aa)) enclose the HTH araC/xylS-type domain. 2 consecutive DNA-binding regions (H-T-H motif) follow at residues 226-247 (TDVA…AEEG) and 273-296 (VNAV…KKYF).

The chain is Transcriptional regulator HilD (hilD) from Salmonella typhimurium (strain SL1344).